A 1342-amino-acid chain; its full sequence is DNA-directed RNA polymerase subunit beta (1342 aa).

It belongs to the RNA polymerase beta chain family. As to quaternary structure, the RNAP catalytic core consists of 2 alpha, 1 beta, 1 beta' and 1 omega subunit. When a sigma factor is associated with the core the holoenzyme is formed, which can initiate transcription.

The catalysed reaction is RNA(n) + a ribonucleoside 5'-triphosphate = RNA(n+1) + diphosphate. In terms of biological role, DNA-dependent RNA polymerase catalyzes the transcription of DNA into RNA using the four ribonucleoside triphosphates as substrates. In Mannheimia succiniciproducens (strain KCTC 0769BP / MBEL55E), this protein is DNA-directed RNA polymerase subunit beta.